The primary structure comprises 181 residues: Protein GrpE (181 aa).

Residues 1–13 (MENTQENPATQSA) show a composition bias toward polar residues. The disordered stretch occupies residues 1–39 (MENTQENPATQSAEDIGSEKQAAQGAAPAAEAADAALAE). Over residues 21 to 39 (QAAQGAAPAAEAADAALAE) the composition is skewed to low complexity.

Belongs to the GrpE family. As to quaternary structure, homodimer.

The protein resides in the cytoplasm. In terms of biological role, participates actively in the response to hyperosmotic and heat shock by preventing the aggregation of stress-denatured proteins, in association with DnaK and GrpE. It is the nucleotide exchange factor for DnaK and may function as a thermosensor. Unfolded proteins bind initially to DnaJ; upon interaction with the DnaJ-bound protein, DnaK hydrolyzes its bound ATP, resulting in the formation of a stable complex. GrpE releases ADP from DnaK; ATP binding to DnaK triggers the release of the substrate protein, thus completing the reaction cycle. Several rounds of ATP-dependent interactions between DnaJ, DnaK and GrpE are required for fully efficient folding. This is Protein GrpE from Burkholderia lata (strain ATCC 17760 / DSM 23089 / LMG 22485 / NCIMB 9086 / R18194 / 383).